Consider the following 372-residue polypeptide: Chaperone protein DnaJ (372 aa).

The region spanning 5 to 69 is the J domain; sequence DYYEVLGLSK…QKKAQYDQFG (65 aa). A CR-type zinc finger spans residues 129–211; it reads GAEKEISVKK…CGGTGRKVKT (83 aa). Zn(2+) contacts are provided by cysteine 142, cysteine 145, cysteine 159, cysteine 162, cysteine 185, cysteine 188, cysteine 199, and cysteine 202. CXXCXGXG motif repeat units lie at residues 142-149, 159-166, 185-192, and 199-206; these read CDTCDGSG, CSTCGGRG, CPDCGGTG, and CSDCGGTG.

The protein belongs to the DnaJ family. Homodimer. Zn(2+) serves as cofactor.

It localises to the cytoplasm. In terms of biological role, participates actively in the response to hyperosmotic and heat shock by preventing the aggregation of stress-denatured proteins and by disaggregating proteins, also in an autonomous, DnaK-independent fashion. Unfolded proteins bind initially to DnaJ; upon interaction with the DnaJ-bound protein, DnaK hydrolyzes its bound ATP, resulting in the formation of a stable complex. GrpE releases ADP from DnaK; ATP binding to DnaK triggers the release of the substrate protein, thus completing the reaction cycle. Several rounds of ATP-dependent interactions between DnaJ, DnaK and GrpE are required for fully efficient folding. Also involved, together with DnaK and GrpE, in the DNA replication of plasmids through activation of initiation proteins. The chain is Chaperone protein DnaJ from Macrococcus caseolyticus (strain JCSC5402) (Macrococcoides caseolyticum).